A 287-amino-acid chain; its full sequence is Urease accessory protein UreD (287 aa).

This sequence belongs to the UreD family. UreD, UreF and UreG form a complex that acts as a GTP-hydrolysis-dependent molecular chaperone, activating the urease apoprotein by helping to assemble the nickel containing metallocenter of UreC. The UreE protein probably delivers the nickel.

It localises to the cytoplasm. Functionally, required for maturation of urease via the functional incorporation of the urease nickel metallocenter. In Aliivibrio fischeri (strain ATCC 700601 / ES114) (Vibrio fischeri), this protein is Urease accessory protein UreD.